A 44-amino-acid polypeptide reads, in one-letter code: Photosystem I reaction center subunit IX 2 (44 aa).

Residues 13–35 (APVLATLWLSSTAVILIGVNSYF) form a helical membrane-spanning segment.

This sequence belongs to the PsaJ family.

Its subcellular location is the cellular thylakoid membrane. Its function is as follows. May help in the organization of the PsaE and PsaF subunits. The sequence is that of Photosystem I reaction center subunit IX 2 (psaJ2) from Prochlorococcus marinus (strain NATL2A).